The sequence spans 106 residues: Small ribosomal subunit protein bS20 (106 aa).

The span at 1-20 (MATAKPKKKNPRLASGRKRV) shows a compositional bias: basic residues. A disordered region spans residues 1–21 (MATAKPKKKNPRLASGRKRVR).

This sequence belongs to the bacterial ribosomal protein bS20 family.

Binds directly to 16S ribosomal RNA. The chain is Small ribosomal subunit protein bS20 from Polaromonas naphthalenivorans (strain CJ2).